Here is an 89-residue protein sequence, read N- to C-terminus: UPF0237 protein CPE1496 (89 aa).

Residues 4-84 form the ACT domain; the sequence is VITVVGKDKV…ISVQHEDIFN (81 aa).

It belongs to the UPF0237 family.

This is UPF0237 protein CPE1496 from Clostridium perfringens (strain 13 / Type A).